The chain runs to 1192 residues: Outer capsid protein VP2 (1192 aa).

The segment at 1112–1192 (IDQFMLDDMP…QSVAKPGIVR (81 aa)) is disordered. Low complexity predominate over residues 1140–1150 (PSAAANTEAST). Polar residues predominate over residues 1159–1183 (NVVSPTVPGQPSQTPVNPNQSTELQ).

The protein resides in the virion. It catalyses the reaction a 5'-end diphospho-ribonucleoside in mRNA + GTP + H(+) = a 5'-end (5'-triphosphoguanosine)-ribonucleoside in mRNA + diphosphate. It carries out the reaction a 5'-end (5'-triphosphoguanosine)-ribonucleoside in mRNA + S-adenosyl-L-methionine = a 5'-end (N(7)-methyl 5'-triphosphoguanosine)-ribonucleoside in mRNA + S-adenosyl-L-homocysteine. Functionally, outer capsid protein involved in mRNA capping. Catalyzes the last 3 enzymatic activities for formation of the 5' cap structure on the viral plus-strand transcripts, namely the RNA guanylyltransferase, RNA-7N- and RNA-2'O-methyltransferase activities. The sequence is that of Outer capsid protein VP2 (S2) from Rice ragged stunt virus (isolate Thailand) (RRSV).